Consider the following 1041-residue polypeptide: Putative transcription elongation factor SPT5 homolog 1 (1041 aa).

The interval 1 to 133 is disordered; the sequence is MPRSRDEDDE…ERGDRRYERR (133 aa). Acidic residues-rich tracts occupy residues 7 to 32, 53 to 69, and 99 to 114; these read EDDELDGDYEALDLEEEEEEDEEEEE, DYAEEDSQEEDDDDEDY, and DDEDEEEEDEAEDDFI. The residue at position 59 (Ser59) is a Phosphoserine. Positions 122–133 are enriched in basic and acidic residues; sequence PDERGDRRYERR. KOW domains follow at residues 273 to 300, 425 to 452, 477 to 504, and 601 to 628; these read DLSRDTWVRMKIGTYKGDLAKVVDVDNV, HFMKGDAVIVIKGDLKNLKGWVEKVDEE, YFEPGNHVKVVSGTHEGATGMVVKVDQH, and VIAVKDDVRVIEGPSKGKQGPVKHIYKG. 2 disordered regions span residues 662-713 and 768-921; these read NRNG…GDDS and DTSR…GTGL. Gly residues predominate over residues 691-703; it reads GRGGGYNNSGGRH. In terms of domain architecture, KOW 5 spans 712 to 739; it reads DSLLGTTVKIRLGPFKGYRGPVVEVKGN. Residues 804 to 814 show a composition bias toward basic and acidic residues; it reads DGMRTPMRDRA. Polar residues-rich tracts occupy residues 835–844 and 893–904; these read SWGTSPQYQP and TPGQPMTPSSAS. Residues 988 to 1015 enclose the KOW 6 domain; the sequence is PPRKSDRVKIVGGQYRGSTGKLIGIDGS.

This sequence belongs to the SPT5 family.

The protein resides in the nucleus. Its function is as follows. May regulate transcription elongation by RNA polymerase II. May enhance transcriptional pausing at sites proximal to the promoter, which may in turn facilitate the assembly of an elongation competent RNA polymerase II complex. This chain is Putative transcription elongation factor SPT5 homolog 1, found in Arabidopsis thaliana (Mouse-ear cress).